The chain runs to 164 residues: 6,7-dimethyl-8-ribityllumazine synthase (164 aa).

5-amino-6-(D-ribitylamino)uracil-binding positions include Y27, 58–60 (ALE), and 87–89 (CVI). Position 92 to 93 (92 to 93 (ET)) interacts with (2S)-2-hydroxy-3-oxobutyl phosphate. H95 functions as the Proton donor in the catalytic mechanism. Residue N120 coordinates 5-amino-6-(D-ribitylamino)uracil. Residue R134 coordinates (2S)-2-hydroxy-3-oxobutyl phosphate.

It belongs to the DMRL synthase family.

It carries out the reaction (2S)-2-hydroxy-3-oxobutyl phosphate + 5-amino-6-(D-ribitylamino)uracil = 6,7-dimethyl-8-(1-D-ribityl)lumazine + phosphate + 2 H2O + H(+). It participates in cofactor biosynthesis; riboflavin biosynthesis; riboflavin from 2-hydroxy-3-oxobutyl phosphate and 5-amino-6-(D-ribitylamino)uracil: step 1/2. Functionally, catalyzes the formation of 6,7-dimethyl-8-ribityllumazine by condensation of 5-amino-6-(D-ribitylamino)uracil with 3,4-dihydroxy-2-butanone 4-phosphate. This is the penultimate step in the biosynthesis of riboflavin. In Methylocella silvestris (strain DSM 15510 / CIP 108128 / LMG 27833 / NCIMB 13906 / BL2), this protein is 6,7-dimethyl-8-ribityllumazine synthase.